Reading from the N-terminus, the 233-residue chain is Small ribosomal subunit protein uS3 (233 aa).

The KH type-2 domain maps to 39-107 (VRKYLTKELE…PAQINIAEVR (69 aa)).

Belongs to the universal ribosomal protein uS3 family. In terms of assembly, part of the 30S ribosomal subunit. Forms a tight complex with proteins S10 and S14.

Functionally, binds the lower part of the 30S subunit head. Binds mRNA in the 70S ribosome, positioning it for translation. The chain is Small ribosomal subunit protein uS3 from Pectobacterium carotovorum subsp. carotovorum (strain PC1).